The chain runs to 1202 residues: Inner capsid protein VP3 (1202 aa).

Disordered stretches follow at residues 1-45 and 73-99; these read MRPI…SGKI and YTSK…PRVT. A compositionally biased stretch (basic and acidic residues) spans 10-21; the sequence is NQERTTTKHQET. Residues 27–45 show a composition bias toward polar residues; the sequence is NEQTTSDQRFTRSSNSGKI.

The protein belongs to the turreted BTV-fold inner capsid family. Homodecamer; each decamer is made up of two conformers of VP2, called VP2A and VP2B. 12 homodecamers assemble to form an icosahedral capsid.

The protein localises to the virion. Functionally, inner capsid protein that self-assembles to form an icosahedral capsid with a T=2 symmetry, which consists of 120 copies of VP2, with channels at each of its five-fold vertices. This capsid constitutes the innermost concentric layer of the viral mature particle. This is Inner capsid protein VP3 (S3) from Aedes pseudoscutellaris reovirus (isolate France) (ApRV).